The following is a 227-amino-acid chain: Testis expressed protein 56 (227 aa).

In terms of tissue distribution, expressed predominantly in the testis.

The polypeptide is Testis expressed protein 56 (Mus musculus (Mouse)).